The sequence spans 1496 residues: DNA-directed RNA polymerase subunit beta' (1496 aa).

Cys70, Cys72, Cys85, and Cys88 together coordinate Zn(2+). Mg(2+)-binding residues include Asp461, Asp463, and Asp465. Residues Cys908, Cys982, Cys989, and Cys992 each coordinate Zn(2+). Residues 1467–1496 (DKDMQVEGESEVPAIPPVAEGSAPEAPPAE) form a disordered region.

Belongs to the RNA polymerase beta' chain family. The RNAP catalytic core consists of 2 alpha, 1 beta, 1 beta' and 1 omega subunit. When a sigma factor is associated with the core the holoenzyme is formed, which can initiate transcription. It depends on Mg(2+) as a cofactor. Zn(2+) is required as a cofactor.

It carries out the reaction RNA(n) + a ribonucleoside 5'-triphosphate = RNA(n+1) + diphosphate. In terms of biological role, DNA-dependent RNA polymerase catalyzes the transcription of DNA into RNA using the four ribonucleoside triphosphates as substrates. The polypeptide is DNA-directed RNA polymerase subunit beta' (Paramagnetospirillum magneticum (strain ATCC 700264 / AMB-1) (Magnetospirillum magneticum)).